A 21-amino-acid chain; its full sequence is Hemocyanin subunit 1 (21 aa).

Belongs to the tyrosinase family. Hemocyanin subfamily. Hemolymph.

The protein resides in the secreted. It is found in the extracellular space. In terms of biological role, hemocyanins are copper-containing oxygen carriers occurring freely dissolved in the hemolymph of many mollusks and arthropods. This chain is Hemocyanin subunit 1, found in Maja squinado (Mediterranean spider crab).